A 471-amino-acid polypeptide reads, in one-letter code: 3-isopropylmalate dehydratase large subunit (471 aa).

[4Fe-4S] cluster-binding residues include Cys351, Cys414, and Cys417.

The protein belongs to the aconitase/IPM isomerase family. LeuC type 1 subfamily. Heterodimer of LeuC and LeuD. [4Fe-4S] cluster serves as cofactor.

The catalysed reaction is (2R,3S)-3-isopropylmalate = (2S)-2-isopropylmalate. It functions in the pathway amino-acid biosynthesis; L-leucine biosynthesis; L-leucine from 3-methyl-2-oxobutanoate: step 2/4. Its function is as follows. Catalyzes the isomerization between 2-isopropylmalate and 3-isopropylmalate, via the formation of 2-isopropylmaleate. The polypeptide is 3-isopropylmalate dehydratase large subunit (Colwellia psychrerythraea (strain 34H / ATCC BAA-681) (Vibrio psychroerythus)).